The sequence spans 577 residues: Copine-8 (577 aa).

2 C2 domains span residues Thr19 to Lys146 and Lys155 to Tyr278. Ca(2+) is bound by residues Asp52, Asp58, Asp112, Asp114, Ser117, Lys122, Asp124, Asp186, Asp192, Asp248, Asp250, and Asp256. At Ser273 the chain carries Phosphoserine. The 202-residue stretch at Asn322–Ile523 folds into the VWFA domain.

It belongs to the copine family. It depends on Ca(2+) as a cofactor.

Functionally, probable calcium-dependent phospholipid-binding protein that may play a role in calcium-mediated intracellular processes. The polypeptide is Copine-8 (Mus musculus (Mouse)).